The following is a 448-amino-acid chain: Divalent metal cation transporter MntH (448 aa).

11 helical membrane-spanning segments follow: residues 41–61 (LFAF…PGNW), 69–89 (SEFG…AVLL), 117–137 (GFVL…AEVI), 147–167 (FGIP…LVLF), 176–196 (IEVI…AEMV), 215–235 (IVTN…TVMP), 270–290 (FSLT…AAAF), 307–327 (LLNP…ALLA), 363–383 (VLAI…GINE), 384–404 (LLIF…IPLV), and 424–444 (IISW…LFYT).

This sequence belongs to the NRAMP family.

It is found in the cell membrane. Its function is as follows. H(+)-stimulated, divalent metal cation uptake system. This is Divalent metal cation transporter MntH from Listeria welshimeri serovar 6b (strain ATCC 35897 / DSM 20650 / CCUG 15529 / CIP 8149 / NCTC 11857 / SLCC 5334 / V8).